The following is a 519-amino-acid chain: ATP synthase subunit alpha 1 (519 aa).

172 to 179 provides a ligand contact to ATP; that stretch reads GDRQTGKT.

This sequence belongs to the ATPase alpha/beta chains family. As to quaternary structure, F-type ATPases have 2 components, CF(1) - the catalytic core - and CF(0) - the membrane proton channel. CF(1) has five subunits: alpha(3), beta(3), gamma(1), delta(1), epsilon(1). CF(0) has three main subunits: a(1), b(2) and c(9-12). The alpha and beta chains form an alternating ring which encloses part of the gamma chain. CF(1) is attached to CF(0) by a central stalk formed by the gamma and epsilon chains, while a peripheral stalk is formed by the delta and b chains.

Its subcellular location is the cell inner membrane. The enzyme catalyses ATP + H2O + 4 H(+)(in) = ADP + phosphate + 5 H(+)(out). Its function is as follows. Produces ATP from ADP in the presence of a proton gradient across the membrane. The alpha chain is a regulatory subunit. The protein is ATP synthase subunit alpha 1 of Psychromonas ingrahamii (strain DSM 17664 / CCUG 51855 / 37).